The chain runs to 145 residues: Large ribosomal subunit protein bL19 (145 aa).

Belongs to the bacterial ribosomal protein bL19 family.

In terms of biological role, this protein is located at the 30S-50S ribosomal subunit interface and may play a role in the structure and function of the aminoacyl-tRNA binding site. In Brucella anthropi (strain ATCC 49188 / DSM 6882 / CCUG 24695 / JCM 21032 / LMG 3331 / NBRC 15819 / NCTC 12168 / Alc 37) (Ochrobactrum anthropi), this protein is Large ribosomal subunit protein bL19.